The primary structure comprises 701 residues: Polyribonucleotide nucleotidyltransferase (701 aa).

Residues D487 and D493 each contribute to the Mg(2+) site. The KH domain occupies 554-613 (PTMIAMKIDTDKIRDVIGKGGATIRAICEETKASIDIEDDGSIKIFGESKEAAEAARQRV). Residues 623-691 (GKIYVGKVER…NRGRIKLSIK (69 aa)) enclose the S1 motif domain.

Belongs to the polyribonucleotide nucleotidyltransferase family. As to quaternary structure, component of the RNA degradosome, which is a multiprotein complex involved in RNA processing and mRNA degradation. Mg(2+) serves as cofactor.

The protein resides in the cytoplasm. The catalysed reaction is RNA(n+1) + phosphate = RNA(n) + a ribonucleoside 5'-diphosphate. In terms of biological role, involved in mRNA degradation. Catalyzes the phosphorolysis of single-stranded polyribonucleotides processively in the 3'- to 5'-direction. This Pseudomonas savastanoi pv. phaseolicola (strain 1448A / Race 6) (Pseudomonas syringae pv. phaseolicola (strain 1448A / Race 6)) protein is Polyribonucleotide nucleotidyltransferase.